Consider the following 199-residue polypeptide: Recombination protein RecR (199 aa).

The C4-type zinc finger occupies 58-73 (CQTCHHLSAEPTCEIC). The Toprim domain maps to 81 to 175 (GQICVVADSR…RVSRIAYGLP (95 aa)).

It belongs to the RecR family.

Functionally, may play a role in DNA repair. It seems to be involved in an RecBC-independent recombinational process of DNA repair. It may act with RecF and RecO. This is Recombination protein RecR from Synechococcus sp. (strain WH7803).